Here is a 106-residue protein sequence, read N- to C-terminus: MLFYFGLAVIFLIDSSQTQTLYKVNEVGGSQVDRNLCGSDIPTAIKDICGIKKRQNIPRKYGRDPNNILEKEEFAKRFLRVRRQTTDIVEECCVENCAIEEIAEYC.

An N-terminal signal peptide occupies residues 1-18; the sequence is MLFYFGLAVIFLIDSSQT. The propeptide occupies 19 to 34; it reads QTLYKVNEVGGSQVDR. Intrachain disulfides connect cysteine 37–cysteine 93, cysteine 49–cysteine 106, and cysteine 92–cysteine 97. The propeptide at 52–82 is c peptide; sequence KKRQNIPRKYGRDPNNILEKEEFAKRFLRVR.

The protein belongs to the insulin family.

It localises to the secreted. Its function is as follows. Insulin decreases blood glucose concentration. May have evolved to activate insulin receptors (INSR) in vertebrates. Molecular docking studies reveals unique interaction with the human insulin receptor. In vivo, insulin-like peptide injection reduces blood glucose levels in two models of zebrafish diabetes (streptozotocin- and glucose-induced). Also shorter swimming distance of zebrafish larvae, an effect which is not observed with human insulin. The sequence is that of Insulin-like peptide 03 from Exaiptasia diaphana (Tropical sea anemone).